We begin with the raw amino-acid sequence, 169 residues long: NADH-quinone oxidoreductase subunit I (169 aa).

2 4Fe-4S ferredoxin-type domains span residues 60 to 90 (LRRY…IEAE) and 100 to 129 (TRYD…EGPN). Residues Cys-70, Cys-73, Cys-76, Cys-80, Cys-109, Cys-112, Cys-115, and Cys-119 each contribute to the [4Fe-4S] cluster site.

It belongs to the complex I 23 kDa subunit family. NDH-1 is composed of 14 different subunits. Subunits NuoA, H, J, K, L, M, N constitute the membrane sector of the complex. [4Fe-4S] cluster serves as cofactor.

It is found in the cell membrane. It catalyses the reaction a quinone + NADH + 5 H(+)(in) = a quinol + NAD(+) + 4 H(+)(out). Functionally, NDH-1 shuttles electrons from NADH, via FMN and iron-sulfur (Fe-S) centers, to quinones in the respiratory chain. The immediate electron acceptor for the enzyme in this species is believed to be ubiquinone. Couples the redox reaction to proton translocation (for every two electrons transferred, four hydrogen ions are translocated across the cytoplasmic membrane), and thus conserves the redox energy in a proton gradient. The polypeptide is NADH-quinone oxidoreductase subunit I (Wolbachia pipientis wMel).